Consider the following 355-residue polypeptide: UDP-N-acetylglucosamine--N-acetylmuramyl-(pentapeptide) pyrophosphoryl-undecaprenol N-acetylglucosamine transferase (355 aa).

Residues 11–13, Asn120, Arg161, Ser188, and Gln280 each bind UDP-N-acetyl-alpha-D-glucosamine; that span reads TGG.

Belongs to the glycosyltransferase 28 family. MurG subfamily.

The protein resides in the cell inner membrane. The enzyme catalyses di-trans,octa-cis-undecaprenyl diphospho-N-acetyl-alpha-D-muramoyl-L-alanyl-D-glutamyl-meso-2,6-diaminopimeloyl-D-alanyl-D-alanine + UDP-N-acetyl-alpha-D-glucosamine = di-trans,octa-cis-undecaprenyl diphospho-[N-acetyl-alpha-D-glucosaminyl-(1-&gt;4)]-N-acetyl-alpha-D-muramoyl-L-alanyl-D-glutamyl-meso-2,6-diaminopimeloyl-D-alanyl-D-alanine + UDP + H(+). Its pathway is cell wall biogenesis; peptidoglycan biosynthesis. Cell wall formation. Catalyzes the transfer of a GlcNAc subunit on undecaprenyl-pyrophosphoryl-MurNAc-pentapeptide (lipid intermediate I) to form undecaprenyl-pyrophosphoryl-MurNAc-(pentapeptide)GlcNAc (lipid intermediate II). The protein is UDP-N-acetylglucosamine--N-acetylmuramyl-(pentapeptide) pyrophosphoryl-undecaprenol N-acetylglucosamine transferase of Prochlorococcus marinus (strain MIT 9211).